Consider the following 432-residue polypeptide: uncharacterized protein (432 aa).

SIS domains follow at residues 105 to 244 (WLTE…DLVS) and 277 to 422 (CDKK…VDLP).

This is an uncharacterized protein from Saccharomyces cerevisiae (strain ATCC 204508 / S288c) (Baker's yeast).